Reading from the N-terminus, the 38-residue chain is Alpha-2-macroglobulin homolog (38 aa).

The segment at residues 27-30 is a cross-link (isoglutamyl cysteine thioester (Cys-Gln)); sequence CGEQ.

Belongs to the protease inhibitor I39 (alpha-2-macroglobulin) family. As to quaternary structure, homodimer; disulfide-linked. As to expression, hemolymph.

It is found in the secreted. In terms of biological role, is able to inhibit all four classes of proteinases by a unique 'trapping' mechanism. This protein has a peptide stretch, called the 'bait region' which contains specific cleavage sites for different proteinases. When a proteinase cleaves the bait region, a conformational change is induced in the protein which traps the proteinase. The entrapped enzyme remains active against low molecular weight substrates (activity against high molecular weight substrates is greatly reduced). Following cleavage in the bait region a thioester bond is hydrolyzed and mediates the covalent binding of the protein to the proteinase. The sequence is that of Alpha-2-macroglobulin homolog from Homarus americanus (American lobster).